We begin with the raw amino-acid sequence, 271 residues long: Formamidopyrimidine-DNA glycosylase (271 aa).

The active-site Schiff-base intermediate with DNA is Pro-2. Glu-3 (proton donor) is an active-site residue. The active-site Proton donor; for beta-elimination activity is the Lys-58. Arg-110 and Arg-152 together coordinate DNA. The segment at 237-271 adopts an FPG-type zinc-finger fold; that stretch reads AVYGQTGKPCTVCGTPIARIRLGNRSTWFCPVCQK. The active-site Proton donor; for delta-elimination activity is the Arg-261.

It belongs to the FPG family. Monomer. Zn(2+) serves as cofactor.

The catalysed reaction is Hydrolysis of DNA containing ring-opened 7-methylguanine residues, releasing 2,6-diamino-4-hydroxy-5-(N-methyl)formamidopyrimidine.. It catalyses the reaction 2'-deoxyribonucleotide-(2'-deoxyribose 5'-phosphate)-2'-deoxyribonucleotide-DNA = a 3'-end 2'-deoxyribonucleotide-(2,3-dehydro-2,3-deoxyribose 5'-phosphate)-DNA + a 5'-end 5'-phospho-2'-deoxyribonucleoside-DNA + H(+). Functionally, involved in base excision repair of DNA damaged by oxidation or by mutagenic agents. Acts as a DNA glycosylase that recognizes and removes damaged bases. Has a preference for oxidized purines, such as 7,8-dihydro-8-oxoguanine (8-oxoG). Has AP (apurinic/apyrimidinic) lyase activity and introduces nicks in the DNA strand. Cleaves the DNA backbone by beta-delta elimination to generate a single-strand break at the site of the removed base with both 3'- and 5'-phosphates. In Geobacter sulfurreducens (strain ATCC 51573 / DSM 12127 / PCA), this protein is Formamidopyrimidine-DNA glycosylase.